A 309-amino-acid chain; its full sequence is Transcription elongation factor S-II (309 aa).

The TFIIS N-terminal domain occupies 5–79 (EVLVHVKNLE…SSWKDAINKN (75 aa)). The disordered stretch occupies residues 78–142 (KNKRSRQAQQ…NSKNDGVDTA (65 aa)). The span at 88 to 102 (HHQDHAPGNAEDKTT) shows a compositional bias: basic and acidic residues. Over residues 103–120 (VGESVNGVQQPASSQSDA) the composition is skewed to polar residues. Phosphoserine is present on Ser-116. The 117-residue stretch at 148–264 (LRDQVLKALY…NAQGATIERS (117 aa)) folds into the TFIIS central domain. The TFIIS-type zinc finger occupies 267–307 (DRFTCGKCKEKKVSYYQLQTRSADEPLTTFCTCEACGNRWK). The Zn(2+) site is built by Cys-271, Cys-274, Cys-299, and Cys-302.

The protein belongs to the TFS-II family.

Its subcellular location is the nucleus. In terms of biological role, necessary for efficient RNA polymerase II transcription elongation past template-encoded arresting sites. The arresting sites in DNA have the property of trapping a certain fraction of elongating RNA polymerases that pass through, resulting in locked ternary complexes. Cleavage of the nascent transcript by S-II allows the resumption of elongation from the new 3'-terminus. Can promote the transfer of one strand of a double-stranded DNA molecule to a homologous single strand and thus may be involved in recombination. The protein is Transcription elongation factor S-II (DST1) of Saccharomyces cerevisiae (strain ATCC 204508 / S288c) (Baker's yeast).